A 105-amino-acid chain; its full sequence is Small ribosomal subunit protein bS20 (105 aa).

Belongs to the bacterial ribosomal protein bS20 family.

Its function is as follows. Binds directly to 16S ribosomal RNA. In Moorella thermoacetica (strain ATCC 39073 / JCM 9320), this protein is Small ribosomal subunit protein bS20.